Reading from the N-terminus, the 34-residue chain is Dermaseptin-H5 (34 aa).

As to expression, expressed by the skin glands.

The protein localises to the secreted. Its function is as follows. Has antimicrobial activity. The chain is Dermaseptin-H5 from Pithecopus hypochondrialis (Orange-legged leaf frog).